A 96-amino-acid chain; its full sequence is Cell division topological specificity factor (96 aa).

It belongs to the MinE family.

Its function is as follows. Prevents the cell division inhibition by proteins MinC and MinD at internal division sites while permitting inhibition at polar sites. This ensures cell division at the proper site by restricting the formation of a division septum at the midpoint of the long axis of the cell. This chain is Cell division topological specificity factor, found in Nitrosococcus oceani (strain ATCC 19707 / BCRC 17464 / JCM 30415 / NCIMB 11848 / C-107).